The following is a 241-amino-acid chain: Carboxy-S-adenosyl-L-methionine synthase (241 aa).

S-adenosyl-L-methionine-binding positions include Y38, 63-65, 88-89, 116-117, N131, and R198; these read GCS, DN, and DI.

It belongs to the class I-like SAM-binding methyltransferase superfamily. Cx-SAM synthase family. Homodimer.

It catalyses the reaction prephenate + S-adenosyl-L-methionine = carboxy-S-adenosyl-L-methionine + 3-phenylpyruvate + H2O. In terms of biological role, catalyzes the conversion of S-adenosyl-L-methionine (SAM) to carboxy-S-adenosyl-L-methionine (Cx-SAM). The sequence is that of Carboxy-S-adenosyl-L-methionine synthase from Pseudoalteromonas translucida (strain TAC 125).